We begin with the raw amino-acid sequence, 480 residues long: Cysteine--tRNA ligase (480 aa).

Position 29 (C29) interacts with Zn(2+). The short motif at 31–41 (ITVYDYCHLGH) is the 'HIGH' region element. Zn(2+)-binding residues include C215, H240, and E244. A 'KMSKS' region motif is present at residues 272–276 (KMSKS). K275 contributes to the ATP binding site.

This sequence belongs to the class-I aminoacyl-tRNA synthetase family. As to quaternary structure, monomer. The cofactor is Zn(2+).

Its subcellular location is the cytoplasm. It catalyses the reaction tRNA(Cys) + L-cysteine + ATP = L-cysteinyl-tRNA(Cys) + AMP + diphosphate. The polypeptide is Cysteine--tRNA ligase (Microcystis aeruginosa (strain NIES-843 / IAM M-2473)).